The following is a 219-amino-acid chain: 16S rRNA (adenine(1408)-N(1))-methyltransferase (219 aa).

S-adenosyl-L-methionine-binding positions include G32, N38, D55, 87 to 88, 104 to 109, and 195 to 197; these read AE, LFPWGT, and SLW.

This sequence belongs to the methyltransferase superfamily. Kanamycin-apramycin resistance family.

The catalysed reaction is adenosine(1408) in 16S rRNA + S-adenosyl-L-methionine = N(1)-methyladenosine(1408) in 16S rRNA + S-adenosyl-L-homocysteine + H(+). Its function is as follows. Specifically methylates the N(1) position of adenine 1408 in 16S rRNA. Confers resistance to various aminoglycosides, including kanamycin, neomycin, apramycin, ribostamycin and gentamicin. Methylates only fully assembled 30S subunits. In Escherichia coli, this protein is 16S rRNA (adenine(1408)-N(1))-methyltransferase (npmA).